Here is a 616-residue protein sequence, read N- to C-terminus: Dihydroxy-acid dehydratase (616 aa).

Asp81 contacts Mg(2+). Cys122 is a binding site for [2Fe-2S] cluster. Residues Asp123 and Lys124 each coordinate Mg(2+). Lys124 carries the N6-carboxylysine modification. Cys195 contacts [2Fe-2S] cluster. A Mg(2+)-binding site is contributed by Glu491. Ser517 acts as the Proton acceptor in catalysis.

This sequence belongs to the IlvD/Edd family. As to quaternary structure, homodimer. [2Fe-2S] cluster serves as cofactor. Mg(2+) is required as a cofactor.

The enzyme catalyses (2R)-2,3-dihydroxy-3-methylbutanoate = 3-methyl-2-oxobutanoate + H2O. The catalysed reaction is (2R,3R)-2,3-dihydroxy-3-methylpentanoate = (S)-3-methyl-2-oxopentanoate + H2O. Its pathway is amino-acid biosynthesis; L-isoleucine biosynthesis; L-isoleucine from 2-oxobutanoate: step 3/4. The protein operates within amino-acid biosynthesis; L-valine biosynthesis; L-valine from pyruvate: step 3/4. Its function is as follows. Functions in the biosynthesis of branched-chain amino acids. Catalyzes the dehydration of (2R,3R)-2,3-dihydroxy-3-methylpentanoate (2,3-dihydroxy-3-methylvalerate) into 2-oxo-3-methylpentanoate (2-oxo-3-methylvalerate) and of (2R)-2,3-dihydroxy-3-methylbutanoate (2,3-dihydroxyisovalerate) into 2-oxo-3-methylbutanoate (2-oxoisovalerate), the penultimate precursor to L-isoleucine and L-valine, respectively. The chain is Dihydroxy-acid dehydratase from Yersinia pseudotuberculosis serotype O:3 (strain YPIII).